We begin with the raw amino-acid sequence, 79 residues long: Sec-independent protein translocase protein TatA (79 aa).

The chain crosses the membrane as a helical span at residues 1–21 (MGSLSIWHWIVVIAVILLLFG). The segment covering 43–60 (MQDDEKTAEKPEPVKTID) has biased composition (basic and acidic residues). A disordered region spans residues 43–79 (MQDDEKTAEKPEPVKTIDHNAPAPGASRSDVGSKTTV).

The protein belongs to the TatA/E family. The Tat system comprises two distinct complexes: a TatABC complex, containing multiple copies of TatA, TatB and TatC subunits, and a separate TatA complex, containing only TatA subunits. Substrates initially bind to the TatABC complex, which probably triggers association of the separate TatA complex to form the active translocon.

The protein resides in the cell inner membrane. In terms of biological role, part of the twin-arginine translocation (Tat) system that transports large folded proteins containing a characteristic twin-arginine motif in their signal peptide across membranes. TatA could form the protein-conducting channel of the Tat system. This is Sec-independent protein translocase protein TatA from Nitrobacter hamburgensis (strain DSM 10229 / NCIMB 13809 / X14).